Consider the following 639-residue polypeptide: tRNA uridine 5-carboxymethylaminomethyl modification enzyme MnmG (639 aa).

Residues 13-18 (GGGHAG), Val-125, and Ser-180 each bind FAD. 273–287 (GPRYCPSIEDKVVRF) is a binding site for NAD(+). Gln-370 serves as a coordination point for FAD. A disordered region spans residues 620–639 (KRQGGNGPQSPRPDDGRARA).

The protein belongs to the MnmG family. Homodimer. Heterotetramer of two MnmE and two MnmG subunits. The cofactor is FAD.

Its subcellular location is the cytoplasm. NAD-binding protein involved in the addition of a carboxymethylaminomethyl (cmnm) group at the wobble position (U34) of certain tRNAs, forming tRNA-cmnm(5)s(2)U34. This is tRNA uridine 5-carboxymethylaminomethyl modification enzyme MnmG from Thioalkalivibrio sulfidiphilus (strain HL-EbGR7).